Consider the following 314-residue polypeptide: Ornithine carbamoyltransferase (314 aa).

Residues 58 to 61, Q85, R109, and 136 to 139 contribute to the carbamoyl phosphate site; these read STRT and HPLQ. Residues N168, D232, and 236-237 each bind L-ornithine; that span reads SM. Residues 272 to 273 and R300 contribute to the carbamoyl phosphate site; that span reads CL.

It belongs to the aspartate/ornithine carbamoyltransferase superfamily. OTCase family.

Its subcellular location is the cytoplasm. It carries out the reaction carbamoyl phosphate + L-ornithine = L-citrulline + phosphate + H(+). The protein operates within amino-acid biosynthesis; L-arginine biosynthesis; L-arginine from L-ornithine and carbamoyl phosphate: step 1/3. Reversibly catalyzes the transfer of the carbamoyl group from carbamoyl phosphate (CP) to the N(epsilon) atom of ornithine (ORN) to produce L-citrulline. This is Ornithine carbamoyltransferase from Hyperthermus butylicus (strain DSM 5456 / JCM 9403 / PLM1-5).